We begin with the raw amino-acid sequence, 535 residues long: Expansin-like protein 9 (535 aa).

The signal sequence occupies residues 1–25; it reads MKINKNNYFKIIIFIIYVIINLINA. The N-linked (GlcNAc...) asparagine glycan is linked to Asn-24. Residues 26–514 lie on the Extracellular side of the membrane; it reads SDNVKLSNCG…DNSSNILLFS (489 aa). Residues 31 to 144 enclose the Expansin-like EG45 domain; that stretch reads LSNCGQARAE…QEVSCGFLGN (114 aa). Cystine bridges form between Cys-34/Cys-75 and Cys-78/Cys-139. Asn-122, Asn-257, and Asn-292 each carry an N-linked (GlcNAc...) asparagine glycan. The disordered stretch occupies residues 459–487; sequence VDGSSNDDDGTGGTGGGASNKVGKRVDGE. The N-linked (GlcNAc...) asparagine glycan is linked to Asn-506. A helical transmembrane segment spans residues 515-535; sequence FNITLTFLLLSLIINILLLLF.

It belongs to the expansin family. Expansin A subfamily.

It is found in the membrane. May serve to lubricate the movement of the cellulose microfibrils during cell growth and wall extension and/or may serve to maintain the fluid state of the slug cell wall. The sequence is that of Expansin-like protein 9 (expl9) from Dictyostelium discoideum (Social amoeba).